Reading from the N-terminus, the 387-residue chain is Anhydro-N-acetylmuramic acid kinase (387 aa).

9–16 (GTSVDGID) contributes to the ATP binding site.

This sequence belongs to the anhydro-N-acetylmuramic acid kinase family.

It carries out the reaction 1,6-anhydro-N-acetyl-beta-muramate + ATP + H2O = N-acetyl-D-muramate 6-phosphate + ADP + H(+). It participates in amino-sugar metabolism; 1,6-anhydro-N-acetylmuramate degradation. It functions in the pathway cell wall biogenesis; peptidoglycan recycling. Functionally, catalyzes the specific phosphorylation of 1,6-anhydro-N-acetylmuramic acid (anhMurNAc) with the simultaneous cleavage of the 1,6-anhydro ring, generating MurNAc-6-P. Is required for the utilization of anhMurNAc either imported from the medium or derived from its own cell wall murein, and thus plays a role in cell wall recycling. The chain is Anhydro-N-acetylmuramic acid kinase from Synechocystis sp. (strain ATCC 27184 / PCC 6803 / Kazusa).